A 219-amino-acid chain; its full sequence is Interleukin-12 subunit alpha (219 aa).

The first 22 residues, 1-22 (MCPARSLLLVATLVLLDYLSLA), serve as a signal peptide directing secretion. Residues asparagine 24, asparagine 93, and asparagine 107 are each glycosylated (N-linked (GlcNAc...) asparagine). Disulfide bonds link cysteine 37/cysteine 110, cysteine 64/cysteine 196, and cysteine 85/cysteine 123.

Belongs to the IL-6 superfamily. Heterodimer with IL12B; disulfide-linked. This heterodimer is known as interleukin IL-12. Heterodimer with EBI3/IL27B; not disulfide-linked. This heterodimer is known as interleukin IL-35. Interacts with NBR1; this interaction promotes IL-12 secretion.

The protein resides in the secreted. Heterodimerizes with IL12B to form the IL-12 cytokine or with EBI3/IL27B to form the IL-35 cytokine. IL-12 is primarily produced by professional antigen-presenting cells (APCs) such as B-cells and dendritic cells (DCs) as well as macrophages and granulocytes and regulates T-cell and natural killer-cell responses, induces the production of interferon-gamma (IFN-gamma), favors the differentiation of T-helper 1 (Th1) cells and is an important link between innate resistance and adaptive immunity. Mechanistically, exerts its biological effects through a receptor composed of IL12R1 and IL12R2 subunits. Binding to the receptor results in the rapid tyrosine phosphorylation of a number of cellular substrates including the JAK family kinases TYK2 and JAK2. In turn, recruited STAT4 gets phosphorylated and translocates to the nucleus where it regulates cytokine/growth factor responsive genes. As part of IL-35, plays essential roles in maintaining the immune homeostasis of the liver microenvironment and also functions as an immune-suppressive cytokine. Mediates biological events through unconventional receptors composed of IL12RB2 and gp130/IL6ST heterodimers or homodimers. Signaling requires the transcription factors STAT1 and STAT4, which form a unique heterodimer that binds to distinct DNA sites. This is Interleukin-12 subunit alpha (IL12A) from Cercocebus atys (Sooty mangabey).